A 287-amino-acid polypeptide reads, in one-letter code: MAATAVNGVAGTSSSGSAAASGAILQAAAGMYEQLKGEWNRKSPNLSKCGEELGRLKLVLLELNFLPTTGTKLTKQQLILARDIQEIGAQWSILRKDIPSFERYMAQLKCYYFDYKEQLPESAYMHQLLGLNLLFLLSQNRVAEFHTELERLPAKDIQTNVYIKHPVSLEQYLMEGSYNKVFLAKGNIPAESYTFFIDILLDTIRDEIAGCIEKAYEKILFTEATRILFFNTPKKMTDYAKKRGWVLGINNYYSFASQQQKPEDTTIPSTELAKQVIEYARQLEMIV.

Ser43 is subject to Phosphoserine. One can recognise a PCI domain in the interval 99 to 268; that stretch reads PSFERYMAQL…QQKPEDTTIP (170 aa). Lys234 participates in a covalent cross-link: Glycyl lysine isopeptide (Lys-Gly) (interchain with G-Cter in SUMO2).

It belongs to the proteasome subunit S14 family. As to quaternary structure, component of the 19S proteasome regulatory particle complex. The 26S proteasome consists of a 20S core particle (CP) and two 19S regulatory subunits (RP). The regulatory particle is made of a lid composed of 9 subunits including PSMD8, a base containing 6 ATPases and few additional components. Interacts with DDI2. Interacts with TASOR.

In terms of biological role, component of the 26S proteasome, a multiprotein complex involved in the ATP-dependent degradation of ubiquitinated proteins. This complex plays a key role in the maintenance of protein homeostasis by removing misfolded or damaged proteins, which could impair cellular functions, and by removing proteins whose functions are no longer required. Therefore, the proteasome participates in numerous cellular processes, including cell cycle progression, apoptosis, or DNA damage repair. In Bos taurus (Bovine), this protein is 26S proteasome non-ATPase regulatory subunit 8 (PSMD8).